A 567-amino-acid polypeptide reads, in one-letter code: Amino-acid acetyltransferase, mitochondrial (567 aa).

The N-acetyltransferase domain maps to 392–558 (KDSPQTNPLH…ARLKEYAKHI (167 aa)).

It belongs to the acetyltransferase family.

Its subcellular location is the mitochondrion. The enzyme catalyses L-glutamate + acetyl-CoA = N-acetyl-L-glutamate + CoA + H(+). Its pathway is amino-acid biosynthesis; L-arginine biosynthesis; N(2)-acetyl-L-ornithine from L-glutamate: step 1/4. In terms of biological role, N-acetylglutamate synthase involved in arginine biosynthesis. This chain is Amino-acid acetyltransferase, mitochondrial (ARG2), found in Vanderwaltozyma polyspora (strain ATCC 22028 / DSM 70294 / BCRC 21397 / CBS 2163 / NBRC 10782 / NRRL Y-8283 / UCD 57-17) (Kluyveromyces polysporus).